The chain runs to 503 residues: Na(+)-translocating NADH-quinone reductase subunit B (503 aa).

5 helical membrane-spanning segments follow: residues 55 to 75, 85 to 105, 120 to 142, 161 to 181, and 186 to 206; these read MMLV…NSGL, PQIM…SFVS, IFLP…FAII, ILPP…GVVI, and FGGT…FLFF. Position 248 is an FMN phosphoryl threonine (Thr-248). Helical transmembrane passes span 361 to 381, 387 to 407, 417 to 437, 452 to 472, and 475 to 495; these read TSTV…IASW, FGLS…LAAG, FFIP…LVFM, WFYG…NPAY, and GVML…RIAL.

The protein belongs to the NqrB/RnfD family. As to quaternary structure, composed of six subunits; NqrA, NqrB, NqrC, NqrD, NqrE and NqrF. The cofactor is FMN.

It is found in the cell inner membrane. The enzyme catalyses a ubiquinone + n Na(+)(in) + NADH + H(+) = a ubiquinol + n Na(+)(out) + NAD(+). Functionally, NQR complex catalyzes the reduction of ubiquinone-1 to ubiquinol by two successive reactions, coupled with the transport of Na(+) ions from the cytoplasm to the periplasm. NqrA to NqrE are probably involved in the second step, the conversion of ubisemiquinone to ubiquinol. The chain is Na(+)-translocating NADH-quinone reductase subunit B from Chlamydia muridarum (strain MoPn / Nigg).